Here is a 1728-residue protein sequence, read N- to C-terminus: U3 small nucleolar RNA-associated protein 10 (1728 aa).

HEAT repeat units lie at residues 540–578, 881–926, 986–1024, 1191–1229, 1235–1274, 1622–1662, and 1683–1721; these read DKDF…LVKE, PANH…MMPA, FMGS…AYEH, LLSI…SEST, REAL…KYGK, ADAT…GQAA, and LQAL…KLGE.

It belongs to the HEATR1/UTP10 family. As to quaternary structure, component of the ribosomal small subunit (SSU) processome.

The protein localises to the nucleus. It localises to the nucleolus. Involved in nucleolar processing of pre-18S ribosomal RNA. Involved in ribosome biosynthesis. The polypeptide is U3 small nucleolar RNA-associated protein 10 (Chaetomium globosum (strain ATCC 6205 / CBS 148.51 / DSM 1962 / NBRC 6347 / NRRL 1970) (Soil fungus)).